The primary structure comprises 548 residues: Probable nuclear hormone receptor HR3 (548 aa).

The interval 1-27 (MNNNQFHELFGSQWPPDQHGGHSSAST) is disordered. The nuclear receptor DNA-binding region spans 101 to 176 (IIPCKVCGDK…LGMSRDAVKF (76 aa)). 2 consecutive NR C4-type zinc fingers follow at residues 104–124 (CKVC…CEGC) and 140–164 (CPRN…LQKC). The tract at residues 198–228 (MRAQNDAAPDSVYDAQQQTPSSSDQFHGHYN) is disordered. Positions 211–222 (DAQQQTPSSSDQ) are enriched in polar residues. One can recognise an NR LBD domain in the interval 295-539 (ISKVLVKSLA…PALYKELFSL (245 aa)).

It belongs to the nuclear hormone receptor family. NR1 subfamily.

It localises to the nucleus. In terms of biological role, putative receptor whose ligand is not yet known. The chain is Probable nuclear hormone receptor HR3 (HR3) from Manduca sexta (Tobacco hawkmoth).